Reading from the N-terminus, the 93-residue chain is Small ribosomal subunit protein uS15 (93 aa).

This sequence belongs to the universal ribosomal protein uS15 family. As to quaternary structure, part of the 30S ribosomal subunit. Forms a bridge to the 50S subunit in the 70S ribosome, contacting the 23S rRNA.

One of the primary rRNA binding proteins, it binds directly to 16S rRNA where it helps nucleate assembly of the platform of the 30S subunit by binding and bridging several RNA helices of the 16S rRNA. In terms of biological role, forms an intersubunit bridge (bridge B4) with the 23S rRNA of the 50S subunit in the ribosome. The protein is Small ribosomal subunit protein uS15 of Anaplasma phagocytophilum (strain HZ).